Consider the following 157-residue polypeptide: Protein Smg homolog (157 aa).

The protein belongs to the Smg family.

The protein is Protein Smg homolog of Shewanella frigidimarina (strain NCIMB 400).